The chain runs to 264 residues: MERAIGVIDSGVGGLTVAKEIMRQLPKERIVYLGDTARCPYGPRPKEEIRQFTWEMTNYLLRYNIKMLVIACNTATAVVLDEIREQLDIPVLGVVHPGARAALKATKNGHIGVIGTIGTVKSGAYEKALKSINHRVRVESLACPKFVPLVESGNFEGEEARKIVAESLEPFKSSNMDVLILGCTHYPLLSPLIKEYMGKRVKLICSGDETAREVSAILHHSHLLYTGQREAEHLFFTTGSKELFQKIASKWFGKPIENVQTIEL.

Substrate contacts are provided by residues 9–10 (DS) and 41–42 (YG). The Proton donor/acceptor role is filled by Cys72. 73–74 (NT) lines the substrate pocket. Catalysis depends on Cys183, which acts as the Proton donor/acceptor. 184–185 (TH) is a binding site for substrate.

The protein belongs to the aspartate/glutamate racemases family.

The enzyme catalyses L-glutamate = D-glutamate. It functions in the pathway cell wall biogenesis; peptidoglycan biosynthesis. In terms of biological role, provides the (R)-glutamate required for cell wall biosynthesis. The sequence is that of Glutamate racemase from Geobacillus sp. (strain WCH70).